The sequence spans 241 residues: Ribosomal RNA large subunit methyltransferase E (241 aa).

Positions 88, 90, 111, 127, and 151 each coordinate S-adenosyl-L-methionine. K191 (proton acceptor) is an active-site residue.

It belongs to the class I-like SAM-binding methyltransferase superfamily. RNA methyltransferase RlmE family.

Its subcellular location is the cytoplasm. It catalyses the reaction uridine(2552) in 23S rRNA + S-adenosyl-L-methionine = 2'-O-methyluridine(2552) in 23S rRNA + S-adenosyl-L-homocysteine + H(+). In terms of biological role, specifically methylates the uridine in position 2552 of 23S rRNA at the 2'-O position of the ribose in the fully assembled 50S ribosomal subunit. This is Ribosomal RNA large subunit methyltransferase E from Bartonella quintana (strain Toulouse) (Rochalimaea quintana).